Consider the following 339-residue polypeptide: Annexin A2 (339 aa).

S2 carries the post-translational modification N-acetylserine. The interval 2-24 is S100A10-binding site; sequence STVHEILCKLSLEGDHSTPPSAY. Phosphotyrosine; by SRC is present on Y24. S26 bears the Phosphoserine; by PKC mark. Annexin repeat units follow at residues 33–104 and 105–176; these read FDAE…GLLK and TPAQ…ALAK. The residue at position 49 (K49) is an N6-acetyllysine; alternate. Residue K49 forms a Glycyl lysine isopeptide (Lys-Gly) (interchain with G-Cter in SUMO1); alternate linkage. Residue K49 forms a Glycyl lysine isopeptide (Lys-Gly) (interchain with G-Cter in SUMO2); alternate linkage. K152 is modified (N6-acetyllysine). Residue S184 is modified to Phosphoserine. 2 Annexin repeats span residues 189 to 261 and 265 to 336; these read ELID…NLVQ and NKPL…YLCG. Phosphotyrosine is present on Y199. Position 227 is an N6-acetyllysine (K227).

This sequence belongs to the annexin family. In terms of assembly, heterotetramer containing 2 light chains of S100A10/p11 and 2 heavy chains of ANXA2/p36. Interacts with ATP1B1. Interacts with DYSF. Interacts with COCH. Interacts (via repeat Annexin 1) with PCSK9 (via the C-terminal domain); the interaction inhibits the degradation of LDLR. Interacts with CEACAM1 (via the cytoplasmic domain); this interaction is regulated by phosphorylation of CEACAM1. Interacts with APPL2 and APPL1; targets APPL2 to endosomes and acting in parallel to RAB5A. Interacts with S100A4. May interact with UBAP2. ISGylated. In terms of tissue distribution, expressed strongly in velvet antler reserve mesenchyme.

Its subcellular location is the secreted. It localises to the extracellular space. The protein resides in the extracellular matrix. It is found in the basement membrane. In terms of biological role, calcium-regulated membrane-binding protein whose affinity for calcium is greatly enhanced by anionic phospholipids. It binds two calcium ions with high affinity. May be involved in heat-stress response. Inhibits PCSK9-enhanced LDLR degradation, probably reduces PCSK9 protein levels via a translational mechanism but also competes with LDLR for binding with PCSK9. Binds to endosomes damaged by phagocytosis of particulate wear debris and participates in endosomal membrane stabilization, thereby limiting NLRP3 inflammasome activation. Required for endothelial cell surface plasmin generation and may support fibrinolytic surveillance and neoangiogenesis. This Cervus elaphus (Red deer) protein is Annexin A2 (ANXA2).